Consider the following 325-residue polypeptide: Ribosomal RNA small subunit methyltransferase H (325 aa).

Residues 38–40, Asp-55, Phe-82, Asp-103, and Gln-110 contribute to the S-adenosyl-L-methionine site; that span reads GGY. Disordered stretches follow at residues 256 to 275 and 281 to 307; these read SGGDAAGSRHRPAPTAAARA and PARKVRPGKAEEARNPRARSATLRSAV.

This sequence belongs to the methyltransferase superfamily. RsmH family.

It is found in the cytoplasm. The enzyme catalyses cytidine(1402) in 16S rRNA + S-adenosyl-L-methionine = N(4)-methylcytidine(1402) in 16S rRNA + S-adenosyl-L-homocysteine + H(+). Its function is as follows. Specifically methylates the N4 position of cytidine in position 1402 (C1402) of 16S rRNA. In Sphingopyxis alaskensis (strain DSM 13593 / LMG 18877 / RB2256) (Sphingomonas alaskensis), this protein is Ribosomal RNA small subunit methyltransferase H.